A 282-amino-acid chain; its full sequence is Formamidopyrimidine-DNA glycosylase (282 aa).

Pro-2 serves as the catalytic Schiff-base intermediate with DNA. Glu-3 (proton donor) is an active-site residue. Lys-60 (proton donor; for beta-elimination activity) is an active-site residue. His-99, Arg-118, and Lys-163 together coordinate DNA. An FPG-type zinc finger spans residues Trp-248–Lys-282. Catalysis depends on Arg-272, which acts as the Proton donor; for delta-elimination activity.

This sequence belongs to the FPG family. Monomer. Zn(2+) serves as cofactor.

It carries out the reaction Hydrolysis of DNA containing ring-opened 7-methylguanine residues, releasing 2,6-diamino-4-hydroxy-5-(N-methyl)formamidopyrimidine.. The enzyme catalyses 2'-deoxyribonucleotide-(2'-deoxyribose 5'-phosphate)-2'-deoxyribonucleotide-DNA = a 3'-end 2'-deoxyribonucleotide-(2,3-dehydro-2,3-deoxyribose 5'-phosphate)-DNA + a 5'-end 5'-phospho-2'-deoxyribonucleoside-DNA + H(+). In terms of biological role, involved in base excision repair of DNA damaged by oxidation or by mutagenic agents. Acts as a DNA glycosylase that recognizes and removes damaged bases. Has a preference for oxidized purines, such as 7,8-dihydro-8-oxoguanine (8-oxoG). Has AP (apurinic/apyrimidinic) lyase activity and introduces nicks in the DNA strand. Cleaves the DNA backbone by beta-delta elimination to generate a single-strand break at the site of the removed base with both 3'- and 5'-phosphates. In Prochlorococcus marinus (strain NATL2A), this protein is Formamidopyrimidine-DNA glycosylase.